Reading from the N-terminus, the 199-residue chain is Thymidine kinase (199 aa).

ATP contacts are provided by residues 15–22 (GSMFSGKS) and 88–91 (DEVQ). Residue glutamate 89 is the Proton acceptor of the active site. The Zn(2+) site is built by cysteine 145, cysteine 148, cysteine 183, and histidine 186.

Belongs to the thymidine kinase family. Homotetramer.

Its subcellular location is the cytoplasm. It carries out the reaction thymidine + ATP = dTMP + ADP + H(+). This chain is Thymidine kinase, found in Staphylococcus aureus (strain Mu50 / ATCC 700699).